The chain runs to 198 residues: NAD(P)H dehydrogenase (quinone) (198 aa).

The region spanning 4-189 (ILVLYYSMYG…SIARYQGEYV (186 aa)) is the Flavodoxin-like domain. FMN is bound by residues 10–15 (SMYGHI) and 78–80 (TRF). NAD(+) is bound at residue Tyr12. Trp98 contacts substrate. Residues 113 to 118 (STGTGG) and His133 each bind FMN.

This sequence belongs to the WrbA family. It depends on FMN as a cofactor.

It carries out the reaction a quinone + NADH + H(+) = a quinol + NAD(+). It catalyses the reaction a quinone + NADPH + H(+) = a quinol + NADP(+). This is NAD(P)H dehydrogenase (quinone) from Salmonella agona (strain SL483).